The following is a 232-amino-acid chain: Orotidine 5'-phosphate decarboxylase (232 aa).

Substrate-binding positions include Asp-13, Lys-35, 62-71 (DLKFHDIPNT), Thr-122, Arg-182, Gln-191, Gly-211, and Arg-212. The Proton donor role is filled by Lys-64.

It belongs to the OMP decarboxylase family. Type 1 subfamily. As to quaternary structure, homodimer.

The catalysed reaction is orotidine 5'-phosphate + H(+) = UMP + CO2. The protein operates within pyrimidine metabolism; UMP biosynthesis via de novo pathway; UMP from orotate: step 2/2. Catalyzes the decarboxylation of orotidine 5'-monophosphate (OMP) to uridine 5'-monophosphate (UMP). The sequence is that of Orotidine 5'-phosphate decarboxylase from Pseudomonas paraeruginosa (strain DSM 24068 / PA7) (Pseudomonas aeruginosa (strain PA7)).